Consider the following 615-residue polypeptide: Cysteine-rich receptor-like protein kinase 1 (615 aa).

The first 28 residues, 1 to 28 (MQICASIAQFLAWVSFLVLLATVGSSSS), serve as a signal peptide directing secretion. 2 consecutive Gnk2-homologous domains span residues 29–131 (SESL…DRDF) and 137–237 (DPTF…THKF). Over 29-266 (SESLLNCQPL…SFFPHLSDRD (238 aa)) the chain is Extracellular. N-linked (GlcNAc...) asparagine glycosylation is found at asparagine 100 and asparagine 165. The helical transmembrane segment at 267-287 (VTRLAIAAISLSILTSLGAFI) threads the bilayer. At 288–615 (SYRRVSRKRK…VLMPDEETRV (328 aa)) the chain is on the cytoplasmic side. A Protein kinase domain is found at 318–602 (FHDSMKLGQG…FEYPKQPPFL (285 aa)). Residues 324–332 (LGQGGAGSV) and lysine 346 each bind ATP. Aspartate 443 (proton acceptor) is an active-site residue.

It belongs to the protein kinase superfamily. Ser/Thr protein kinase family. CRK subfamily. As to expression, expressed in the whole plant at low levels.

It is found in the membrane. The catalysed reaction is L-seryl-[protein] + ATP = O-phospho-L-seryl-[protein] + ADP + H(+). The enzyme catalyses L-threonyl-[protein] + ATP = O-phospho-L-threonyl-[protein] + ADP + H(+). The polypeptide is Cysteine-rich receptor-like protein kinase 1 (Arabidopsis thaliana (Mouse-ear cress)).